We begin with the raw amino-acid sequence, 858 residues long: Phosphoenolpyruvate carboxylase (858 aa).

Catalysis depends on residues His-145 and Lys-531.

It belongs to the PEPCase type 1 family. It depends on Mg(2+) as a cofactor.

The enzyme catalyses oxaloacetate + phosphate = phosphoenolpyruvate + hydrogencarbonate. In terms of biological role, forms oxaloacetate, a four-carbon dicarboxylic acid source for the tricarboxylic acid cycle. This Thermus thermophilus (strain ATCC BAA-163 / DSM 7039 / HB27) protein is Phosphoenolpyruvate carboxylase.